The primary structure comprises 701 residues: Arachidonate 12-lipoxygenase, 12R-type (701 aa).

Residues 2–119 (ATYKVKVATG…TLSLREATGK (118 aa)) form the PLAT domain. The region spanning 120 to 701 (TTADDTLPIL…PVLIENSISI (582 aa)) is the Lipoxygenase domain. Fe cation is bound by residues H398, H403, H578, N582, and I701.

The protein belongs to the lipoxygenase family. Fe cation serves as cofactor.

The protein resides in the cytoplasm. It localises to the perinuclear region. It carries out the reaction (5Z,8Z,11Z,14Z)-eicosatetraenoate + O2 = (12R)-hydroperoxy-(5Z,8Z,10E,14Z)-eicosatetraenoate. The catalysed reaction is N-[omega-(9Z,12Z)-octadecadienoyloxy]acyl-beta-D-glucosyl-(1&lt;-&gt;1)-octadecasphing-4E-enine + O2 = N-[omega-(9R)-hydroperoxy-(10E,12Z)-octadecadienoyloxy]acyl-beta-D-glucosyl-(1&lt;-&gt;1)-octadecasphing-4E-enine. The enzyme catalyses a N-[omega-(9Z,12Z)-octadecadienoyloxy]-acylsphin-4E-enine + O2 = a N-[omega-(9R)-hydroperoxy-(10E,12Z)-octadecadienoyloxy]-acylsphin-4E-enine. It catalyses the reaction (6Z,9Z,12Z)-octadecatrienoate + O2 = 10-hydroperoxy-(6Z,8E,12Z)-octadecatrienoate. It carries out the reaction (4Z,7Z,10Z,13Z,16Z,19Z)-docosahexaenoate + O2 = 14-hydroperoxy-(4Z,7Z,10Z,12E,16Z,19Z)-docosahexaenoate. The catalysed reaction is (8Z,11Z,14Z)-eicosatrienoate + O2 = (8Z,10E,14Z)-12-hydroperoxyeicosatrienoate. The enzyme catalyses (5Z,8Z,11Z,14Z,17Z)-eicosapentaenoate + O2 = (5Z,7Z,8Z,10E,14Z,17Z)-12-hydroperoxyeicosapentaenoate. It catalyses the reaction (6Z,9Z,12Z)-octadecatrienoate + O2 = 10R-hydroperoxy-(6Z,8E,12Z)-octadecatrienoate. It carries out the reaction 1-O-methyl-(5Z,8Z,11Z,14Z)-eicosatetraenoate + O2 = 1-O-methyl (5Z,8Z,10E,12R,14Z)-hydroperoxyiecosatetraenoate. The catalysed reaction is 1-O-methyl-(5Z,8Z,11Z,14Z)-eicosatetraenoate + O2 = 1-O-methyl-8-hydroperoxy-(5Z,9E,11Z,14Z)-eicosatetraenoate. The enzyme catalyses 1-O-methyl-(5Z,8Z,11Z,14Z)-eicosatetraenoate + O2 = 1-O-methyl-(8R)-hydroperoxy-(5Z,9E,11Z,14Z)-eicosatrienoate. It catalyses the reaction 1-O-methyl-(9Z,12Z)-octadecadienoate + O2 = 1-O-methyl-(9R)-hydroperoxy-(10E,12Z)-octadecadienoate. It carries out the reaction 1-O-methyl-20-hydroxy-(5Z,8Z,11Z,14Z)-eicosatetraenoate + O2 = 1-O-methyl-8-hydroperoxy-20-hydroxy-(5Z,9E,11Z,14Z)-eicosatetraenoate. The catalysed reaction is 1-O-methyl-20-hydroxy-(5Z,8Z,11Z,14Z)-eicosatetraenoate + O2 = 1-O-methyl-12-hydroperoxy-20-hydroxy-(5Z,8Z,10E,14Z)-eicosatetraenoate. The enzyme catalyses 1-O-methyl-20-hydroxy-(5Z,8Z,11Z,14Z)-eicosatetraenoate + O2 = 1-O-methyl-9-hydroperoxy-20-hydroxy-(5Z,7E,11Z,14Z)-eicosatetraenoate. It catalyses the reaction 1-O-methyl-(9Z,12Z)-octadecadienoate + O2 = 1-O-methyl-(13S)-hydroperoxy-(9Z,11E)-octadecadienoate. The protein operates within lipid metabolism; hydroperoxy eicosatetraenoic acid biosynthesis. Its pathway is lipid metabolism; sphingolipid metabolism. Increased by calcium. In terms of biological role, catalyzes the regio and stereo-specific incorporation of a single molecule of dioxygen into free and esterified polyunsaturated fatty acids generating lipid hydroperoxides that can be further reduced to the corresponding hydroxy species. In the skin, acts upstream of ALOXE3 on the lineolate moiety of esterified omega-hydroxyacyl-sphingosine (EOS) ceramides to produce an epoxy-ketone derivative, a crucial step in the conjugation of omega-hydroxyceramide to membrane proteins. Therefore plays a crucial role in the synthesis of corneocytes lipid envelope and the establishment of the skin barrier to water loss. May also play a role in the regulation of the expression of airway mucins. The protein is Arachidonate 12-lipoxygenase, 12R-type of Rattus norvegicus (Rat).